The sequence spans 345 residues: uncharacterized protein (345 aa).

This sequence belongs to the Gfo/Idh/MocA family. Biliverdin reductase subfamily.

This is an uncharacterized protein from Escherichia coli (strain K12).